Consider the following 164-residue polypeptide: HTH-type transcriptional regulator IscR (164 aa).

The region spanning 2–131 (RLTSKGRYAV…NNITLAELVN (130 aa)) is the HTH rrf2-type domain. The H-T-H motif DNA-binding region spans 28 to 51 (LADISERQGISLSYLEQLFSRLRK). Positions 92, 98, and 104 each coordinate [2Fe-2S] cluster. The tract at residues 143–164 (NNDTRRTANGRPQETINVNLRA) is disordered. Over residues 152 to 164 (GRPQETINVNLRA) the composition is skewed to polar residues.

The cofactor is [2Fe-2S] cluster.

Functionally, regulates the transcription of several operons and genes involved in the biogenesis of Fe-S clusters and Fe-S-containing proteins. The sequence is that of HTH-type transcriptional regulator IscR from Yersinia pseudotuberculosis serotype O:1b (strain IP 31758).